The sequence spans 308 residues: Aspartate carbamoyltransferase catalytic subunit (308 aa).

Positions 55 and 56 each coordinate carbamoyl phosphate. K84 serves as a coordination point for L-aspartate. Positions 105, 133, and 136 each coordinate carbamoyl phosphate. R167 and R228 together coordinate L-aspartate. L267 and P268 together coordinate carbamoyl phosphate.

The protein belongs to the aspartate/ornithine carbamoyltransferase superfamily. ATCase family. As to quaternary structure, heterooligomer of catalytic and regulatory chains.

The catalysed reaction is carbamoyl phosphate + L-aspartate = N-carbamoyl-L-aspartate + phosphate + H(+). Its pathway is pyrimidine metabolism; UMP biosynthesis via de novo pathway; (S)-dihydroorotate from bicarbonate: step 2/3. Functionally, catalyzes the condensation of carbamoyl phosphate and aspartate to form carbamoyl aspartate and inorganic phosphate, the committed step in the de novo pyrimidine nucleotide biosynthesis pathway. The chain is Aspartate carbamoyltransferase catalytic subunit from Methanocella arvoryzae (strain DSM 22066 / NBRC 105507 / MRE50).